The primary structure comprises 79 residues: Probable [Fe-S]-dependent transcriptional repressor (79 aa).

Iron-sulfur cluster-binding residues include Cys-54, Cys-59, Cys-62, and Cys-68.

The protein belongs to the FeoC family.

Functionally, may function as a transcriptional regulator that controls feoABC expression. The protein is Probable [Fe-S]-dependent transcriptional repressor of Photorhabdus laumondii subsp. laumondii (strain DSM 15139 / CIP 105565 / TT01) (Photorhabdus luminescens subsp. laumondii).